The chain runs to 59 residues: MAELKVTQIKSTIGTKQNQRNSLRTLGLKGIRQTVVREDNAQNRGLINVVRHLVTVEEV.

Belongs to the universal ribosomal protein uL30 family. Part of the 50S ribosomal subunit.

This chain is Large ribosomal subunit protein uL30, found in Rhodococcus jostii (strain RHA1).